The following is a 220-amino-acid chain: Germin-like protein subfamily 2 member 4 (220 aa).

An N-terminal signal peptide occupies residues 1–21; sequence MDSRCFGFFFTLLSLNVIVLA. Cys31 and Cys46 are disulfide-bonded. Residues Asn51 and Asn69 are each glycosylated (N-linked (GlcNAc...) asparagine). The region spanning 58 to 209 is the Cupin type-1 domain; the sequence is FFAGIGKPAV…TFQIGTKEIE (152 aa). Residues His108, His110, Glu115, and His154 each contribute to the Mn(2+) site.

The protein belongs to the germin family. Oligomer (believed to be a pentamer but probably hexamer).

It is found in the secreted. It localises to the extracellular space. The protein localises to the apoplast. Its function is as follows. May play a role in plant defense. Probably has no oxalate oxidase activity even if the active site is conserved. The polypeptide is Germin-like protein subfamily 2 member 4 (GLP10) (Arabidopsis thaliana (Mouse-ear cress)).